A 367-amino-acid polypeptide reads, in one-letter code: Ferrochelatase (367 aa).

Residues histidine 226 and glutamate 307 each coordinate Fe cation.

This sequence belongs to the ferrochelatase family.

The protein resides in the cytoplasm. The enzyme catalyses heme b + 2 H(+) = protoporphyrin IX + Fe(2+). It participates in porphyrin-containing compound metabolism; protoheme biosynthesis; protoheme from protoporphyrin-IX: step 1/1. Functionally, catalyzes the ferrous insertion into protoporphyrin IX. This chain is Ferrochelatase, found in Burkholderia pseudomallei (strain 1106a).